The primary structure comprises 679 residues: Methionine--tRNA ligase (679 aa).

Positions 14-24 (PYANGSIHLGH) match the 'HIGH' region motif. Zn(2+) contacts are provided by cysteine 145, cysteine 148, cysteine 158, and cysteine 161. A 'KMSKS' region motif is present at residues 331 to 335 (KMSKS). Lysine 334 contributes to the ATP binding site. The 103-residue stretch at 577 to 679 (TFAAVDLRVA…SGAKPGQRIK (103 aa)) folds into the tRNA-binding domain.

This sequence belongs to the class-I aminoacyl-tRNA synthetase family. MetG type 1 subfamily. Homodimer. It depends on Zn(2+) as a cofactor.

It localises to the cytoplasm. The catalysed reaction is tRNA(Met) + L-methionine + ATP = L-methionyl-tRNA(Met) + AMP + diphosphate. Functionally, is required not only for elongation of protein synthesis but also for the initiation of all mRNA translation through initiator tRNA(fMet) aminoacylation. The polypeptide is Methionine--tRNA ligase (Pseudomonas putida (strain ATCC 47054 / DSM 6125 / CFBP 8728 / NCIMB 11950 / KT2440)).